The primary structure comprises 423 residues: D-tagatose-1,6-bisphosphate aldolase subunit GatZ (423 aa).

It belongs to the GatZ/KbaZ family. GatZ subfamily. Forms a complex with GatY.

The protein operates within carbohydrate metabolism; D-tagatose 6-phosphate degradation; D-glyceraldehyde 3-phosphate and glycerone phosphate from D-tagatose 6-phosphate: step 2/2. Its function is as follows. Component of the tagatose-1,6-bisphosphate aldolase GatYZ that is required for full activity and stability of the Y subunit. Could have a chaperone-like function for the proper and stable folding of GatY. When expressed alone, GatZ does not show any aldolase activity. Is involved in the catabolism of galactitol. The polypeptide is D-tagatose-1,6-bisphosphate aldolase subunit GatZ (Salmonella newport (strain SL254)).